The chain runs to 260 residues: Ribosomal RNA small subunit methyltransferase A (260 aa).

Positions 16, 18, 43, 64, 86, and 108 each coordinate S-adenosyl-L-methionine.

Belongs to the class I-like SAM-binding methyltransferase superfamily. rRNA adenine N(6)-methyltransferase family. RsmA subfamily.

It is found in the cytoplasm. The catalysed reaction is adenosine(1518)/adenosine(1519) in 16S rRNA + 4 S-adenosyl-L-methionine = N(6)-dimethyladenosine(1518)/N(6)-dimethyladenosine(1519) in 16S rRNA + 4 S-adenosyl-L-homocysteine + 4 H(+). In terms of biological role, specifically dimethylates two adjacent adenosines (A1518 and A1519) in the loop of a conserved hairpin near the 3'-end of 16S rRNA in the 30S particle. May play a critical role in biogenesis of 30S subunits. The sequence is that of Ribosomal RNA small subunit methyltransferase A from Buchnera aphidicola subsp. Baizongia pistaciae (strain Bp).